Reading from the N-terminus, the 838-residue chain is Periplasmic nitrate reductase (838 aa).

Residues 1–29 constitute a signal peptide (tat-type signal); it reads MDMSRRTLLKAQAAAAAAAVAGIDLPAEA. Residues 40–96 form the 4Fe-4S Mo/W bis-MGD-type domain; that stretch reads LKWSKAPCRFCGTGCGVMVGVKDGRVVATHGDMQAEVNRGLNCVKGYFLSKIMYGAD. [4Fe-4S] cluster is bound by residues Cys-47, Cys-50, Cys-54, and Cys-82. Mo-bis(molybdopterin guanine dinucleotide) contacts are provided by residues Lys-84, Gln-151, Asn-176, Cys-180, 213–220, 244–248, 263–265, Met-374, Gln-378, Asn-484, 510–511, Lys-533, Asp-560, and 720–729; these read WGSNMAEM, STYEH, GTD, SD, and TGRVLEHWHS. Phe-796 contacts substrate. Mo-bis(molybdopterin guanine dinucleotide) is bound by residues Asn-804 and Lys-821.

The protein belongs to the prokaryotic molybdopterin-containing oxidoreductase family. NasA/NapA/NarB subfamily. As to quaternary structure, component of the periplasmic nitrate reductase NapAB complex composed of NapA and NapB. Requires [4Fe-4S] cluster as cofactor. The cofactor is Mo-bis(molybdopterin guanine dinucleotide). Predicted to be exported by the Tat system. The position of the signal peptide cleavage has not been experimentally proven.

The protein localises to the periplasm. The catalysed reaction is 2 Fe(II)-[cytochrome] + nitrate + 2 H(+) = 2 Fe(III)-[cytochrome] + nitrite + H2O. Catalytic subunit of the periplasmic nitrate reductase complex NapAB. Receives electrons from NapB and catalyzes the reduction of nitrate to nitrite. The chain is Periplasmic nitrate reductase from Methylobacterium sp. (strain 4-46).